Reading from the N-terminus, the 640-residue chain is Choline O-acetyltransferase (640 aa).

Ser17 is modified (phosphoserine). The active-site Proton acceptor is His334. The residue at position 365 (Ser365) is a Phosphoserine. Residues 412–424, Ser450, and Gln551 each bind CoA; that span reads GKTFIKKQKYSPD. The tract at residues 614–640 is disordered; that stretch reads CSSRQPADSKPPAPKEKARGPSQAKQS.

It belongs to the carnitine/choline acetyltransferase family. In terms of assembly, monomer.

The enzyme catalyses choline + acetyl-CoA = acetylcholine + CoA. Functionally, catalyzes the reversible synthesis of acetylcholine (ACh) from acetyl CoA and choline at cholinergic synapses. The chain is Choline O-acetyltransferase (Chat) from Rattus norvegicus (Rat).